An 82-amino-acid chain; its full sequence is Endocuticle structural protein SgAbd-6 (82 aa).

Pyrrolidone carboxylic acid is present on glutamine 1. One can recognise a Chitin-binding type R&amp;R domain in the interval 18 to 82; that stretch reads LGQYTFGFKT…ENGFQPQYTQ (65 aa).

Functionally, component of the abdominal endocuticle. This is Endocuticle structural protein SgAbd-6 from Schistocerca gregaria (Desert locust).